The primary structure comprises 135 residues: Protein PilG (135 aa).

One can recognise a Response regulatory domain in the interval 9–125 (KVMVIDDSKT…ELLGAIKAHV (117 aa)). 4-aspartylphosphate is present on Asp58.

In terms of processing, phosphorylated.

Plays an essential role in both cAMP-dependent and independent regulation of twitching motility. Regulates the cAMP-independent coordination of type IV pilus (T4P) biogenesis and retraction that plays a role in surface and host cell adhesion, colonization, biofilm maturation, virulence, and twitching. In addition, phosphorylated PilG is necessary for cAMP production via regulation of the adenylate cyclase CyaB. Acts therefore as a response regulator of the chemosensory system/Chp system. The protein is Protein PilG (pilG) of Pseudomonas aeruginosa (strain ATCC 15692 / DSM 22644 / CIP 104116 / JCM 14847 / LMG 12228 / 1C / PRS 101 / PAO1).